The sequence spans 183 residues: MKTINFITGNKNKLAEVRAIIGNVVDVQNQTVDVPEIQGTIEEIAKEKCRHAANAVGGPVLTEDTALGFHALKGLPGPYIKFFLEALGHEGLNKMLDGFESRGAEAVCTFAFSPGPGSEPILFQGRTEGVIVSPRGPANFGWDPIFEYEGQTYAEMTKEEKNKISHRYKALVKLQQWLVDELS.

An ITP-binding site is contributed by 8–13; sequence TGNKNK. Mg(2+) is bound at residue Glu-36. ITP-binding positions include Lys-48, 64-65, Lys-81, 140-143, Lys-161, and 166-167; these read DT, FGWD, and HR.

The protein belongs to the HAM1 NTPase family. In terms of assembly, homodimer. The cofactor is Mg(2+). It depends on Mn(2+) as a cofactor.

The protein localises to the cytoplasm. The protein resides in the nucleus. The enzyme catalyses ITP + H2O = IMP + diphosphate + H(+). It catalyses the reaction dITP + H2O = dIMP + diphosphate + H(+). The catalysed reaction is XTP + H2O = XMP + diphosphate + H(+). In terms of biological role, pyrophosphatase that hydrolyzes non-canonical purine nucleotides such as inosine triphosphate (ITP), deoxyinosine triphosphate (dITP) or xanthosine 5'-triphosphate (XTP) to their respective monophosphate derivatives. The enzyme does not distinguish between the deoxy- and ribose forms. Probably excludes non-canonical purines from RNA and DNA precursor pools, thus preventing their incorporation into RNA and DNA and avoiding chromosomal lesions. The protein is Inosine triphosphate pyrophosphatase of Emericella nidulans (strain FGSC A4 / ATCC 38163 / CBS 112.46 / NRRL 194 / M139) (Aspergillus nidulans).